The primary structure comprises 199 residues: Tumor necrosis factor ligand superfamily member 4 (199 aa).

At Met-1–Lys-25 the chain is on the cytoplasmic side. Residues Val-26–Leu-48 traverse the membrane as a helical; Signal-anchor for type II membrane protein segment. Topologically, residues Gln-49–Leu-199 are extracellular. A THD domain is found at Pro-59 to Val-176. 2 disulfide bridges follow: Cys-70–Cys-163 and Cys-98–Cys-184. 2 N-linked (GlcNAc...) asparagine glycosylation sites follow: Asn-91 and Asn-157.

The protein belongs to the tumor necrosis factor family. As to quaternary structure, homotrimer. In terms of tissue distribution, detected in T-cell lines, but not in a macrophage cell line.

It localises to the membrane. Functionally, cytokine that binds to TNFRSF4. Co-stimulates T-cell proliferation and cytokine production. The polypeptide is Tumor necrosis factor ligand superfamily member 4 (Tnfsf4) (Rattus norvegicus (Rat)).